The chain runs to 85 residues: Small ribosomal subunit protein uS15 (85 aa).

The protein belongs to the universal ribosomal protein uS15 family. Part of the 30S ribosomal subunit. Forms a bridge to the 50S subunit in the 70S ribosome, contacting the 23S rRNA.

In terms of biological role, one of the primary rRNA binding proteins, it binds directly to 16S rRNA where it helps nucleate assembly of the platform of the 30S subunit by binding and bridging several RNA helices of the 16S rRNA. Functionally, forms an intersubunit bridge (bridge B4) with the 23S rRNA of the 50S subunit in the ribosome. The sequence is that of Small ribosomal subunit protein uS15 from Fusobacterium nucleatum subsp. nucleatum (strain ATCC 25586 / DSM 15643 / BCRC 10681 / CIP 101130 / JCM 8532 / KCTC 2640 / LMG 13131 / VPI 4355).